Consider the following 329-residue polypeptide: uncharacterized protein (329 aa).

This sequence to type I restriction system adenine methylases.

This is an uncharacterized protein from Bacillus subtilis (strain 168).